The primary structure comprises 727 residues: DNA ligase (727 aa).

NAD(+) is bound by residues 71–75, 120–121, and glutamate 150; these read DGEFD and SL. Lysine 152 (N6-AMP-lysine intermediate) is an active-site residue. Residues arginine 173, glutamate 213, lysine 329, and lysine 353 each contribute to the NAD(+) site. Residues cysteine 447, cysteine 450, cysteine 466, and cysteine 472 each contribute to the Zn(2+) site. Positions 636–725 constitute a BRCT domain; the sequence is SIERHLTGLS…PEAAAEAALP (90 aa).

Belongs to the NAD-dependent DNA ligase family. LigA subfamily. It depends on Mg(2+) as a cofactor. Mn(2+) is required as a cofactor.

The catalysed reaction is NAD(+) + (deoxyribonucleotide)n-3'-hydroxyl + 5'-phospho-(deoxyribonucleotide)m = (deoxyribonucleotide)n+m + AMP + beta-nicotinamide D-nucleotide.. In terms of biological role, DNA ligase that catalyzes the formation of phosphodiester linkages between 5'-phosphoryl and 3'-hydroxyl groups in double-stranded DNA using NAD as a coenzyme and as the energy source for the reaction. It is essential for DNA replication and repair of damaged DNA. This Saccharopolyspora erythraea (strain ATCC 11635 / DSM 40517 / JCM 4748 / NBRC 13426 / NCIMB 8594 / NRRL 2338) protein is DNA ligase.